Reading from the N-terminus, the 84-residue chain is Small ribosomal subunit protein uS17 (84 aa).

The protein belongs to the universal ribosomal protein uS17 family. Part of the 30S ribosomal subunit.

Functionally, one of the primary rRNA binding proteins, it binds specifically to the 5'-end of 16S ribosomal RNA. The polypeptide is Small ribosomal subunit protein uS17 (Vibrio atlanticus (strain LGP32) (Vibrio splendidus (strain Mel32))).